A 456-amino-acid chain; its full sequence is Protein odr-4 homolog (456 aa).

Over residues 374 to 401 (IESSKNNNNNNNNNNNNNNNNNNNNSKL) the composition is skewed to low complexity. The tract at residues 374–403 (IESSKNNNNNNNNNNNNNNNNNNNNSKLSN) is disordered. The chain crosses the membrane as a helical span at residues 436–456 (YLIIIISVLVLMVAFYFKFFV).

It belongs to the ODR-4 family.

The protein localises to the membrane. In terms of biological role, may play a role in the trafficking of a subset of G-protein coupled receptors. The polypeptide is Protein odr-4 homolog (Dictyostelium discoideum (Social amoeba)).